The following is a 167-amino-acid chain: NAD(P)H-quinone oxidoreductase subunit I, chloroplastic (167 aa).

4Fe-4S ferredoxin-type domains follow at residues Gly55–Lys84 and Leu95–Glu124. 8 residues coordinate [4Fe-4S] cluster: Cys64, Cys67, Cys70, Cys74, Cys104, Cys107, Cys110, and Cys114.

It belongs to the complex I 23 kDa subunit family. As to quaternary structure, NDH is composed of at least 16 different subunits, 5 of which are encoded in the nucleus. Requires [4Fe-4S] cluster as cofactor.

It is found in the plastid. Its subcellular location is the chloroplast thylakoid membrane. It catalyses the reaction a plastoquinone + NADH + (n+1) H(+)(in) = a plastoquinol + NAD(+) + n H(+)(out). It carries out the reaction a plastoquinone + NADPH + (n+1) H(+)(in) = a plastoquinol + NADP(+) + n H(+)(out). In terms of biological role, NDH shuttles electrons from NAD(P)H:plastoquinone, via FMN and iron-sulfur (Fe-S) centers, to quinones in the photosynthetic chain and possibly in a chloroplast respiratory chain. The immediate electron acceptor for the enzyme in this species is believed to be plastoquinone. Couples the redox reaction to proton translocation, and thus conserves the redox energy in a proton gradient. This is NAD(P)H-quinone oxidoreductase subunit I, chloroplastic from Lepidium virginicum (Virginia pepperweed).